The following is a 297-amino-acid chain: uncharacterized protein (297 aa).

Disordered regions lie at residues 12–43 (QNNN…TNDN), 65–85 (VPNS…DKPI), 122–151 (KVST…TNET), and 265–297 (SRLS…DQNN). The segment covering 65–79 (VPNSINVNTSSSGNK) has biased composition (polar residues). Positions 122–135 (KVSTTTTTTSSTSK) are enriched in low complexity. The segment covering 140–151 (QTITKPNKTNET) has biased composition (polar residues). A compositionally biased stretch (low complexity) spans 268–287 (SSNNNNNNNNNNNNNNNNSN).

This is an uncharacterized protein from Dictyostelium discoideum (Social amoeba).